The primary structure comprises 465 residues: uncharacterized protein (465 aa).

Residues 13–71 (GPRPGLRLELQAIDLDRDGHGLARWQGWVVVVPGLLPGERAKVQLQQRQKSRWLSRISE) enclose the TRAM domain. The [4Fe-4S] cluster site is built by C84, C90, C93, and C171. S-adenosyl-L-methionine contacts are provided by Q294, Y324, E345, and D391. C418 (nucleophile) is an active-site residue.

Belongs to the class I-like SAM-binding methyltransferase superfamily. RNA M5U methyltransferase family.

This is an uncharacterized protein from Parasynechococcus marenigrum (strain WH8102).